The chain runs to 664 residues: DNA ligase (664 aa).

NAD(+)-binding positions include 31–35, 80–81, and Glu-110; these read DSTYD and SL. Lys-112 (N6-AMP-lysine intermediate) is an active-site residue. Residues Arg-133, Glu-167, Lys-282, and Lys-306 each contribute to the NAD(+) site. Zn(2+)-binding residues include Cys-400, Cys-403, Cys-418, and Cys-423. The 82-residue stretch at 583–664 folds into the BRCT domain; sequence QSNAPLAGKT…LLEELAKYEG (82 aa).

Belongs to the NAD-dependent DNA ligase family. LigA subfamily. The cofactor is Mg(2+). It depends on Mn(2+) as a cofactor.

The enzyme catalyses NAD(+) + (deoxyribonucleotide)n-3'-hydroxyl + 5'-phospho-(deoxyribonucleotide)m = (deoxyribonucleotide)n+m + AMP + beta-nicotinamide D-nucleotide.. Its function is as follows. DNA ligase that catalyzes the formation of phosphodiester linkages between 5'-phosphoryl and 3'-hydroxyl groups in double-stranded DNA using NAD as a coenzyme and as the energy source for the reaction. It is essential for DNA replication and repair of damaged DNA. The sequence is that of DNA ligase from Exiguobacterium sibiricum (strain DSM 17290 / CCUG 55495 / CIP 109462 / JCM 13490 / 255-15).